Consider the following 147-residue polypeptide: D-aminoacyl-tRNA deacylase (147 aa).

Positions 136–137 (GP) match the Gly-cisPro motif, important for rejection of L-amino acids motif.

Belongs to the DTD family. As to quaternary structure, homodimer.

The protein resides in the cytoplasm. The enzyme catalyses glycyl-tRNA(Ala) + H2O = tRNA(Ala) + glycine + H(+). It carries out the reaction a D-aminoacyl-tRNA + H2O = a tRNA + a D-alpha-amino acid + H(+). An aminoacyl-tRNA editing enzyme that deacylates mischarged D-aminoacyl-tRNAs. Also deacylates mischarged glycyl-tRNA(Ala), protecting cells against glycine mischarging by AlaRS. Acts via tRNA-based rather than protein-based catalysis; rejects L-amino acids rather than detecting D-amino acids in the active site. By recycling D-aminoacyl-tRNA to D-amino acids and free tRNA molecules, this enzyme counteracts the toxicity associated with the formation of D-aminoacyl-tRNA entities in vivo and helps enforce protein L-homochirality. This chain is D-aminoacyl-tRNA deacylase, found in Streptococcus pyogenes serotype M6 (strain ATCC BAA-946 / MGAS10394).